Reading from the N-terminus, the 430-residue chain is Glutamate-1-semialdehyde 2,1-aminomutase (430 aa).

K269 is subject to N6-(pyridoxal phosphate)lysine.

The protein belongs to the class-III pyridoxal-phosphate-dependent aminotransferase family. HemL subfamily. As to quaternary structure, homodimer. It depends on pyridoxal 5'-phosphate as a cofactor.

It localises to the cytoplasm. It catalyses the reaction (S)-4-amino-5-oxopentanoate = 5-aminolevulinate. Its pathway is porphyrin-containing compound metabolism; protoporphyrin-IX biosynthesis; 5-aminolevulinate from L-glutamyl-tRNA(Glu): step 2/2. The chain is Glutamate-1-semialdehyde 2,1-aminomutase from Desulfitobacterium hafniense (strain DSM 10664 / DCB-2).